The following is a 468-amino-acid chain: Zinc transporter SLC39A7 (468 aa).

The helical transmembrane segment at 10 to 30 (WVAVGLLTWAALGLLVAGHEG) threads the bilayer. 2 stretches are compositionally biased toward basic and acidic residues: residues 36-56 (RDVE…DFHH) and 64-100 (HTHE…DSLH). The tract at residues 36–116 (RDVEEDFHGH…SHGASREAGA (81 aa)) is disordered. At His64 the chain carries Pros-methylhistidine. Helical transmembrane passes span 132 to 152 (ALGA…LIPV), 163 to 183 (LQIL…LHLI), and 208 to 228 (GPIL…LVVE). Positions 237-248 (GHGHAHAHGHGH) are enriched in basic residues. The tract at residues 237–313 (GHGHAHAHGH…NPEEEKTGSD (77 aa)) is disordered. Over residues 249-312 (SHGDSHAHGH…QNPEEEKTGS (64 aa)) the composition is skewed to basic and acidic residues. 3 helical membrane passes run 385 to 405 (LTAI…GGAV), 409 to 429 (VAGG…FIYV), and 447 to 467 (SLLE…IAHL).

Belongs to the ZIP transporter (TC 2.A.5) family. KE4/Catsup subfamily. In terms of assembly, homodimer. Post-translationally, rapidly phosphorylated by CK2 following Zn(2+) treatment. This phosphorylation is required for efficient cytosolic Zn(2+) release.

It is found in the endoplasmic reticulum membrane. The protein localises to the golgi apparatus. Its subcellular location is the cis-Golgi network membrane. It carries out the reaction Zn(2+)(in) = Zn(2+)(out). Its function is as follows. Transports Zn(2+) from the endoplasmic reticulum (ER)/Golgi apparatus to the cytosol, playing an essential role in the regulation of cytosolic zinc levels. Acts as a gatekeeper of zinc release from intracellular stores, requiring post-translational activation by phosphorylation on residues, resulting in activation of multiple downstream pathways leading to cell growth and proliferation. Has an essential role in B cell development and is required for proper B cell receptor signaling. Plays an important role in maintaining intestinal epithelial homeostasis and skin dermis development by regulating ER function. Controls cell signaling pathways involved in glucose metabolism in skeletal muscle. Has a protective role against ER stress in different biological contexts. Mediates Zn(2+)-induced ferroptosis. The chain is Zinc transporter SLC39A7 from Rattus norvegicus (Rat).